A 762-amino-acid chain; its full sequence is Polyadenylate-binding protein, cytoplasmic and nuclear (762 aa).

A disordered region spans residues 39 to 58; the sequence is TGEEIDTAGPTPSSAAPHPQ. Residues 48 to 58 are compositionally biased toward low complexity; that stretch reads PTPSSAAPHPQ. 4 RRM domains span residues 61–139, 149–226, 242–320, and 346–470; these read ASLY…WSQR, GNVF…HHIP, TNIY…RAQK, and VNLY…LAQR. Disordered stretches follow at residues 376–429, 596–663, and 740–762; these read KVMR…KSKL, SALA…AGAP, and VRQQ…EEKA. The span at 389-425 shows a compositional bias: basic and acidic residues; it reads GESKEGEESEKNKENKPEEKEGDDSKPEEKEGEDSKS. Residues 600–612 are compositionally biased toward gly residues; it reads GGRGGPAGRGPMQ. The span at 645-663 shows a compositional bias: low complexity; it reads AAGRAPAGAPAGARGAGAP. Residues 664-741 enclose the PABC domain; it reads EGLQGQLAAV…ALAVYDDYVR (78 aa). Residues 753–762 are compositionally biased toward basic and acidic residues; the sequence is SKEEKTEEKA.

This sequence belongs to the polyadenylate-binding protein type-1 family.

Its subcellular location is the cytoplasm. It localises to the nucleus. Binds the poly(A) tail of mRNA. Appears to be an important mediator of the multiple roles of the poly(A) tail in mRNA biogenesis, stability and translation. In the nucleus, involved in both mRNA cleavage and polyadenylation. Is also required for efficient mRNA export to the cytoplasm. Acts in concert with a poly(A)-specific nuclease (PAN) to affect poly(A) tail shortening, which may occur concomitantly with either nucleocytoplasmic mRNA transport or translational initiation. In the cytoplasm, stimulates translation initiation and regulates mRNA decay through translation termination-coupled poly(A) shortening, probably mediated by PAN. The polypeptide is Polyadenylate-binding protein, cytoplasmic and nuclear (PAB1) (Pyricularia oryzae (strain 70-15 / ATCC MYA-4617 / FGSC 8958) (Rice blast fungus)).